The following is a 950-amino-acid chain: Xylosyltransferase 1 (950 aa).

Topologically, residues 1-17 are cytoplasmic; it reads MVAAPSARRLVRRSHSA. The helical; Signal-anchor for type II membrane protein transmembrane segment at 18–38 threads the bilayer; that stretch reads LLAALTVLLLQTLVGWNFSSL. At 39–950 the chain is on the lumenal side; sequence HSGAGERRGG…GAVKPDGRLR (912 aa). Positions 42–246 are disordered; that stretch reads AGERRGGAAA…ELRYDQPPKC (205 aa). A compositionally biased stretch (low complexity) spans 91 to 104; that stretch reads PPARARARALAGCP. The segment covering 134–150 has biased composition (basic and acidic residues); it reads KVRTDSNNENSVPKDFE. Positions 152-161 are enriched in polar residues; that stretch reads VDNSNFAPRT. Residues 166–193 show a composition bias toward basic and acidic residues; it reads HQPELAKKPPSRQKELLKRRLEQEEKGK. N215 is a glycosylation site (N-linked (GlcNAc...) asparagine). Intrachain disulfides connect C246/C274, C290/C531, C550/C563, and C552/C561. Residues V322, D350, and 379–381 contribute to the UDP-alpha-D-xylose site; that span reads TIW. A glycan (N-linked (GlcNAc...) asparagine) is linked at N410. 483 to 484 contributes to the UDP-alpha-D-xylose binding site; it reads DW. Residues S564 and 587 to 588 each bind UDP-alpha-D-xylose; that span reads RK. 2 disulfides stabilise this stretch: C664–C918 and C911–C924. N768 carries an N-linked (GlcNAc...) asparagine glycan. The interval 931 to 950 is disordered; that stretch reads SFSPDPKSELGAVKPDGRLR.

It belongs to the glycosyltransferase 14 family. XylT subfamily. In terms of assembly, monomer. Requires a divalent metal cation as cofactor. Contains 7 disulfide bonds. In terms of processing, N-glycosylated.

The protein localises to the golgi apparatus membrane. It catalyses the reaction UDP-alpha-D-xylose + L-seryl-[protein] = 3-O-(beta-D-xylosyl)-L-seryl-[protein] + UDP + H(+). It participates in glycan metabolism; chondroitin sulfate biosynthesis. The protein operates within glycan metabolism; heparan sulfate biosynthesis. In terms of biological role, catalyzes the first step in the biosynthesis of chondroitin sulfate and dermatan sulfate proteoglycans, such as DCN. Transfers D-xylose from UDP-D-xylose to specific serine residues of the core protein. Required for normal maturation of chondrocytes during bone development, normal onset of ossification and normal embryonic and postnatal skeleton development, especially of the long bones. The protein is Xylosyltransferase 1 (XYLT1) of Canis lupus familiaris (Dog).